We begin with the raw amino-acid sequence, 577 residues long: Outer spore wall assembly protein SHE10 (577 aa).

Positions 1–23 (MGKLIKLITTLTVLVSLLQYCCE) are cleaved as a signal peptide. 2 coiled-coil regions span residues 379 to 416 (NETR…ENVE) and 513 to 561 (ILRS…EEDV). Residues 525–545 (RERKERERKEREKAAAEEFQR) show a composition bias toward basic and acidic residues. A disordered region spans residues 525 to 577 (RERKERERKEREKAAAEEFQRQQELLLQQEEEDEEDVSYTSTSTITTTTTMTL). A compositionally biased stretch (low complexity) spans 562–577 (SYTSTSTITTTTTMTL).

Belongs to the SHE10 family. Component of the mitochondria-localized RNase mitochondrial RNA-processing (RNase MRP) composed of one single RNA encoded by the NME1 gene and at least 31 proteins. Absent in the nucleus-localized RNase MRP (NuMRP).

The protein resides in the mitochondrion. Involved in spore wall assembly. May be a component of the mitochondrial RNase MRP (MtMRP), a ribonucleoprotein endoribonuclease involved in the cleaving RNA transcripts to generate primers for DNA replication in mitochondria. The chain is Outer spore wall assembly protein SHE10 from Saccharomyces cerevisiae (strain RM11-1a) (Baker's yeast).